We begin with the raw amino-acid sequence, 39 residues long: Natriuretic peptide CnNP-a (39 aa).

Residues S1 to I8 constitute a propeptide that is removed on maturation. A disulfide bond links C12 and C28.

It belongs to the natriuretic peptide family. As to expression, expressed by the venom gland.

The protein resides in the secreted. In terms of biological role, snake venom natriuretic peptide that targets both NPR1 and NPR2. Exhibits hypotensive and vasodepressor activities. This Cryptophis nigrescens (Eastern small-eyed snake) protein is Natriuretic peptide CnNP-a.